Consider the following 376-residue polypeptide: 26S proteasome non-ATPase regulatory subunit 13 (376 aa).

The PCI domain occupies 171–338 (SYYKDALRFL…KRVHMTWVQP (168 aa)). Lysine 298 is modified (N6-acetyllysine).

The protein belongs to the proteasome subunit S11 family. As to quaternary structure, component of the 19S proteasome regulatory particle complex. The 26S proteasome consists of a 20S core particle (CP) and two 19S regulatory subunits (RP). The regulatory particle is made of a lid composed of 9 subunits including PSMD13, a base containing 6 ATPases and few additional components.

Its function is as follows. Component of the 26S proteasome, a multiprotein complex involved in the ATP-dependent degradation of ubiquitinated proteins. This complex plays a key role in the maintenance of protein homeostasis by removing misfolded or damaged proteins, which could impair cellular functions, and by removing proteins whose functions are no longer required. Therefore, the proteasome participates in numerous cellular processes, including cell cycle progression, apoptosis, or DNA damage repair. The chain is 26S proteasome non-ATPase regulatory subunit 13 from Rattus norvegicus (Rat).